A 405-amino-acid polypeptide reads, in one-letter code: Magnesium-protoporphyrin IX monomethyl ester [oxidative] cyclase, chloroplastic (405 aa).

The transit peptide at 1–43 (MATEMALVKPISKFSTSSPIFSNSRYGKFTTVRMSSTSQSTTK) directs the protein to the chloroplast.

Belongs to the AcsF family. It depends on Fe cation as a cofactor.

It is found in the plastid. The protein localises to the chloroplast. The catalysed reaction is Mg-protoporphyrin IX 13-monomethyl ester + 3 NADPH + 3 O2 + 2 H(+) = 3,8-divinyl protochlorophyllide a + 3 NADP(+) + 5 H2O. The protein operates within porphyrin-containing compound metabolism; chlorophyll biosynthesis. Catalyzes the formation of the isocyclic ring in chlorophyll biosynthesis. Mediates the cyclase reaction, which results in the formation of divinylprotochlorophyllide (Pchlide) characteristic of all chlorophylls from magnesium-protoporphyrin IX 13-monomethyl ester (MgPMME). The chain is Magnesium-protoporphyrin IX monomethyl ester [oxidative] cyclase, chloroplastic (CRD1) from Gossypium hirsutum (Upland cotton).